The primary structure comprises 318 residues: Lipid A biosynthesis acyltransferase (318 aa).

A helical transmembrane segment spans residues 27–47 (PQYWGIWLGIFFLLLLAFVPF). The short motif at 145 to 150 (HGWAID) is the HXXXXD motif element.

Belongs to the LpxL/LpxM/LpxP family. LpxM subfamily.

It is found in the cell inner membrane. The enzyme catalyses an alpha-Kdo-(2-&gt;4)-alpha-Kdo-(2-&gt;6)-(acyl)-lipid IVA + a fatty acyl-[ACP] = an alpha-Kdo-(2-&gt;4)-alpha-Kdo-(2-&gt;6)-lipid A + holo-[ACP]. Its pathway is glycolipid biosynthesis; KDO(2)-lipid A biosynthesis; KDO(2)-lipid A from CMP-3-deoxy-D-manno-octulosonate and lipid IV(A): step 4/4. It functions in the pathway bacterial outer membrane biogenesis; lipopolysaccharide biosynthesis. Functionally, catalyzes the transfer of an acyl chain from an acyl-[acyl-carrier-protein] (ACP) to a Kdo(2)-(acyl)-lipid IV(A) to form a Kdo(2)-lipid A. The protein is Lipid A biosynthesis acyltransferase of Haemophilus influenzae (strain ATCC 51907 / DSM 11121 / KW20 / Rd).